The chain runs to 549 residues: Chaperonin GroEL (549 aa).

Residues 29 to 32, Lys50, 86 to 90, Gly414, 477 to 479, and Asp493 contribute to the ATP site; these read TLGP, DGTTT, and NAL.

It belongs to the chaperonin (HSP60) family. As to quaternary structure, forms a cylinder of 14 subunits composed of two heptameric rings stacked back-to-back. Interacts with the co-chaperonin GroES.

Its subcellular location is the cytoplasm. The enzyme catalyses ATP + H2O + a folded polypeptide = ADP + phosphate + an unfolded polypeptide.. Together with its co-chaperonin GroES, plays an essential role in assisting protein folding. The GroEL-GroES system forms a nano-cage that allows encapsulation of the non-native substrate proteins and provides a physical environment optimized to promote and accelerate protein folding. This chain is Chaperonin GroEL, found in Leptospira biflexa serovar Patoc (strain Patoc 1 / Ames).